Consider the following 142-residue polypeptide: uncharacterized protein (142 aa).

Residues 1 to 26 (MITEFIKSFLLFFFLPFFLSMPMIFA) form the signal peptide.

This is an uncharacterized protein from Schizosaccharomyces pombe (strain 972 / ATCC 24843) (Fission yeast).